The primary structure comprises 66 residues: Large ribosomal subunit protein bL35 (66 aa).

It belongs to the bacterial ribosomal protein bL35 family.

The protein is Large ribosomal subunit protein bL35 of Synechococcus sp. (strain RCC307).